We begin with the raw amino-acid sequence, 150 residues long: Large ribosomal subunit protein bL9 (150 aa).

This sequence belongs to the bacterial ribosomal protein bL9 family.

Functionally, binds to the 23S rRNA. This is Large ribosomal subunit protein bL9 from Herminiimonas arsenicoxydans.